A 510-amino-acid polypeptide reads, in one-letter code: Histidine ammonia-lyase (510 aa).

Residues 143–145 (ASG) constitute a cross-link (5-imidazolinone (Ala-Gly)). Serine 144 is modified (2,3-didehydroalanine (Ser)).

It belongs to the PAL/histidase family. Post-translationally, contains an active site 4-methylidene-imidazol-5-one (MIO), which is formed autocatalytically by cyclization and dehydration of residues Ala-Ser-Gly.

Its subcellular location is the cytoplasm. The enzyme catalyses L-histidine = trans-urocanate + NH4(+). The protein operates within amino-acid degradation; L-histidine degradation into L-glutamate; N-formimidoyl-L-glutamate from L-histidine: step 1/3. This chain is Histidine ammonia-lyase, found in Aliivibrio fischeri (strain MJ11) (Vibrio fischeri).